Consider the following 323-residue polypeptide: Beta-ketoacyl-[acyl-carrier-protein] synthase III (323 aa).

Active-site residues include C113 and H250. The interval 251–255 (QANKR) is ACP-binding. The active site involves N280.

This sequence belongs to the thiolase-like superfamily. FabH family. As to quaternary structure, homodimer.

It localises to the cytoplasm. It carries out the reaction malonyl-[ACP] + acetyl-CoA + H(+) = 3-oxobutanoyl-[ACP] + CO2 + CoA. It participates in lipid metabolism; fatty acid biosynthesis. Catalyzes the condensation reaction of fatty acid synthesis by the addition to an acyl acceptor of two carbons from malonyl-ACP. Catalyzes the first condensation reaction which initiates fatty acid synthesis and may therefore play a role in governing the total rate of fatty acid production. Possesses both acetoacetyl-ACP synthase and acetyl transacylase activities. Its substrate specificity determines the biosynthesis of branched-chain and/or straight-chain of fatty acids. The chain is Beta-ketoacyl-[acyl-carrier-protein] synthase III from Brucella abortus biovar 1 (strain 9-941).